The following is a 191-amino-acid chain: Probable chemoreceptor glutamine deamidase CheD (191 aa).

This sequence belongs to the CheD family.

It carries out the reaction L-glutaminyl-[protein] + H2O = L-glutamyl-[protein] + NH4(+). Probably deamidates glutamine residues to glutamate on methyl-accepting chemotaxis receptors (MCPs), playing an important role in chemotaxis. This chain is Probable chemoreceptor glutamine deamidase CheD, found in Hydrogenovibrio crunogenus (strain DSM 25203 / XCL-2) (Thiomicrospira crunogena).